The chain runs to 261 residues: Pyrroline-5-carboxylate reductase (261 aa).

It belongs to the pyrroline-5-carboxylate reductase family.

The protein resides in the cytoplasm. It catalyses the reaction L-proline + NADP(+) = (S)-1-pyrroline-5-carboxylate + NADPH + 2 H(+). The enzyme catalyses L-proline + NAD(+) = (S)-1-pyrroline-5-carboxylate + NADH + 2 H(+). Its pathway is amino-acid biosynthesis; L-proline biosynthesis; L-proline from L-glutamate 5-semialdehyde: step 1/1. In terms of biological role, catalyzes the reduction of 1-pyrroline-5-carboxylate (PCA) to L-proline. The chain is Pyrroline-5-carboxylate reductase from Thermus thermophilus (strain ATCC BAA-163 / DSM 7039 / HB27).